A 524-amino-acid polypeptide reads, in one-letter code: GMP synthase [glutamine-hydrolyzing] (524 aa).

Positions 8-206 (KILILDFGSQ…VRKLCQCEAR (199 aa)) constitute a Glutamine amidotransferase type-1 domain. Cys-85 (nucleophile) is an active-site residue. Active-site residues include His-180 and Glu-182. In terms of domain architecture, GMPS ATP-PPase spans 207–399 (WTTGNIVEDA…LGLPYEMVYR (193 aa)). 234 to 240 (SGGVDSS) is an ATP binding site.

As to quaternary structure, homodimer.

The enzyme catalyses XMP + L-glutamine + ATP + H2O = GMP + L-glutamate + AMP + diphosphate + 2 H(+). Its pathway is purine metabolism; GMP biosynthesis; GMP from XMP (L-Gln route): step 1/1. Its function is as follows. Catalyzes the synthesis of GMP from XMP. The polypeptide is GMP synthase [glutamine-hydrolyzing] (Methylococcus capsulatus (strain ATCC 33009 / NCIMB 11132 / Bath)).